Consider the following 122-residue polypeptide: Large ribosomal subunit protein uL14c (122 aa).

Belongs to the universal ribosomal protein uL14 family. Part of the 50S ribosomal subunit.

It localises to the plastid. Its subcellular location is the chloroplast. Binds to 23S rRNA. The chain is Large ribosomal subunit protein uL14c from Chara vulgaris (Common stonewort).